The chain runs to 207 residues: Uridine kinase (207 aa).

An ATP-binding site is contributed by glycine 13 to threonine 20.

The protein belongs to the uridine kinase family.

Its subcellular location is the cytoplasm. It carries out the reaction uridine + ATP = UMP + ADP + H(+). The enzyme catalyses cytidine + ATP = CMP + ADP + H(+). It functions in the pathway pyrimidine metabolism; CTP biosynthesis via salvage pathway; CTP from cytidine: step 1/3. Its pathway is pyrimidine metabolism; UMP biosynthesis via salvage pathway; UMP from uridine: step 1/1. The chain is Uridine kinase from Ureaplasma parvum serovar 3 (strain ATCC 27815 / 27 / NCTC 11736).